We begin with the raw amino-acid sequence, 235 residues long: MASSSNWLSGVNVVLVMAYGSLVFVLLFIFVKRQIMRFAMKSRRGPHVPVGHNAPKDLKEEIDIRLSRVQDIKYEPQLLADDDTRLLQLETQGSQKIPFHAEGRHPCSLMGKNFRSYLLDLRNTSTPFKGVRKALIDTLLDGYETARYGTGVFGQSEYLRYQEALSELATVVKARIGSSQRQHQSAAKDLTQSPEMSPTTIQVTYLPSSQKSKRPKHFLELKSFKDNYNTLESTL.

Residues 11–31 (VNVVLVMAYGSLVFVLLFIFV) traverse the membrane as a helical segment.

Its subcellular location is the membrane. The protein localises to the golgi apparatus. The protein resides in the mitochondrion. Its function is as follows. General regulator of phagocytosis. Required to uptake Gram negative bacterium by macrophages. In Rattus norvegicus (Rat), this protein is Protein C1orf43 homolog.